A 261-amino-acid polypeptide reads, in one-letter code: Indole-3-glycerol phosphate synthase (261 aa).

Belongs to the TrpC family.

The catalysed reaction is 1-(2-carboxyphenylamino)-1-deoxy-D-ribulose 5-phosphate + H(+) = (1S,2R)-1-C-(indol-3-yl)glycerol 3-phosphate + CO2 + H2O. Its pathway is amino-acid biosynthesis; L-tryptophan biosynthesis; L-tryptophan from chorismate: step 4/5. In Burkholderia vietnamiensis (strain G4 / LMG 22486) (Burkholderia cepacia (strain R1808)), this protein is Indole-3-glycerol phosphate synthase.